The primary structure comprises 305 residues: Putative lipid kinase SaurJH9_0749 (305 aa).

Positions N3 to Y139 constitute a DAGKc domain. ATP contacts are provided by residues S44, G74–E80, and T101. 3 residues coordinate Mg(2+): S220, D223, and E225. E281 acts as the Proton acceptor in catalysis.

The protein belongs to the diacylglycerol/lipid kinase family. Mg(2+) is required as a cofactor.

Its function is as follows. May catalyze the ATP-dependent phosphorylation of lipids other than diacylglycerol (DAG). The polypeptide is Putative lipid kinase SaurJH9_0749 (Staphylococcus aureus (strain JH9)).